A 505-amino-acid polypeptide reads, in one-letter code: Glutamyl-tRNA(Gln) amidotransferase subunit A (505 aa).

Catalysis depends on charge relay system residues Lys-80 and Ser-155. The active-site Acyl-ester intermediate is Ser-179.

This sequence belongs to the amidase family. GatA subfamily. Heterotrimer of A, B and C subunits.

It catalyses the reaction L-glutamyl-tRNA(Gln) + L-glutamine + ATP + H2O = L-glutaminyl-tRNA(Gln) + L-glutamate + ADP + phosphate + H(+). Allows the formation of correctly charged Gln-tRNA(Gln) through the transamidation of misacylated Glu-tRNA(Gln) in organisms which lack glutaminyl-tRNA synthetase. The reaction takes place in the presence of glutamine and ATP through an activated gamma-phospho-Glu-tRNA(Gln). This chain is Glutamyl-tRNA(Gln) amidotransferase subunit A, found in Acidothermus cellulolyticus (strain ATCC 43068 / DSM 8971 / 11B).